The sequence spans 306 residues: Glutaminase (306 aa).

Substrate contacts are provided by S64, N115, E159, N166, Y190, Y242, and V260.

The protein belongs to the glutaminase family. Homotetramer.

It catalyses the reaction L-glutamine + H2O = L-glutamate + NH4(+). In Vibrio cholerae serotype O1 (strain ATCC 39315 / El Tor Inaba N16961), this protein is Glutaminase.